Consider the following 214-residue polypeptide: Lazarillo protein (214 aa).

Residues 1–21 (MIRRGLLSVTAALVLLSVSCS) form the signal peptide. N-linked (GlcNAc...) asparagine glycans are attached at residues Asn-38, Asn-74, Asn-84, Asn-90, Asn-130, Asn-158, and Asn-161. The GPI-anchor amidated alanine moiety is linked to residue Ala-192. Positions 193-214 (GAEHVVGAMLSVAIASLFALLH) are cleaved as a propeptide — removed in mature form.

The protein belongs to the calycin superfamily. Lipocalin family. N-glycosylated. Post-translationally, contains disulfide bonds. As to expression, expressed by a subset of neuroblasts, ganglion mother cells and neurons of the CNS; by all sensory neurons of the PNS.

The protein resides in the cell membrane. Its function is as follows. Putative role in axonal outgrowth and guidance, required for the navigation of identified commissural neurons. Could be a receptor the midline morphogen. The polypeptide is Lazarillo protein (Schistocerca americana (American grasshopper)).